A 175-amino-acid polypeptide reads, in one-letter code: Probable RNA-binding protein EIF1AD (175 aa).

Residues 5–89 (TKKRYITNKV…VKGEIEYILD (85 aa)) enclose the S1-like domain. Residues 116 to 128 (EAKRGQTSDKMID) show a composition bias toward basic and acidic residues. Positions 116-175 (EAKRGQTSDKMIDDDMLPPSESEEEDESEGEETYDEDDVDDEEEEEFDTYNPNRMQAPSK) are disordered. The segment covering 129–163 (DDMLPPSESEEEDESEGEETYDEDDVDDEEEEEFD) has biased composition (acidic residues). A compositionally biased stretch (polar residues) spans 165–175 (YNPNRMQAPSK).

It belongs to the EIF1AD family.

In Caenorhabditis elegans, this protein is Probable RNA-binding protein EIF1AD.